An 860-amino-acid chain; its full sequence is Spindle and centriole-associated protein 1 (860 aa).

Disordered regions lie at residues 127–150 (RKRT…GINQ), 172–201 (DDAG…HSNR), 230–250 (ATQS…AEDQ), and 294–332 (PLLA…TGSS). Polar residues-rich tracts occupy residues 139–150 (PDSSQSHTGINQ), 190–200 (ELPNSLSQHSN), and 230–245 (ATQS…SSEL). Phosphothreonine is present on Thr236. Ser240 carries the post-translational modification Phosphoserine. Positions 317-329 (SSSTASADRPSST) are enriched in low complexity. A coiled-coil region spans residues 383-439 (RYLKESEIQLRKEVETRQQLEQMLGDHRELIDALTAEILSLREENSTMQARLQQYMV). The disordered stretch occupies residues 623–645 (PAFVSLSQPPCSSLPSTQQPRNP). The segment covering 627 to 642 (SLSQPPCSSLPSTQQP) has biased composition (low complexity). A Phosphoserine modification is found at Ser648. The segment at 693-718 (ITSSGGEQGDGLREPRKQGSASEVST) is disordered. The stretch at 729–757 (SSMEERIAELNRQSMEARSKLLQLIEQQK) forms a coiled coil. A phosphoserine mark is found at Ser765, Ser766, Ser769, and Ser824. A disordered region spans residues 792 to 860 (GMEASESSKC…GWFALSAHIP (69 aa)). Residues 804 to 824 (VSPVSGNSSRRSSGAISNSCS) show a composition bias toward low complexity.

As to quaternary structure, interacts with CEP120.

It is found in the cytoplasm. Its subcellular location is the cytoskeleton. The protein resides in the microtubule organizing center. It localises to the centrosome. The protein localises to the centriole. It is found in the spindle. In terms of biological role, regulator required for centriole duplication, for proper bipolar spindle formation and chromosome congression in mitosis. This chain is Spindle and centriole-associated protein 1 (Spice1), found in Mus musculus (Mouse).